A 554-amino-acid polypeptide reads, in one-letter code: Phosphomannomutase (554 aa).

Ser-149 functions as the Phosphoserine intermediate in the catalytic mechanism. Mg(2+)-binding residues include Ser-149, Asp-301, Asp-303, and Asp-305.

This sequence belongs to the phosphohexose mutase family. Requires Mg(2+) as cofactor.

It carries out the reaction alpha-D-mannose 1-phosphate = D-mannose 6-phosphate. This is Phosphomannomutase (manB) from Mycoplasma pneumoniae (strain ATCC 29342 / M129 / Subtype 1) (Mycoplasmoides pneumoniae).